Consider the following 193-residue polypeptide: Flagellar transcriptional regulator FlhC (193 aa).

C138, C141, C158, and C161 together coordinate Zn(2+).

It belongs to the FlhC family. As to quaternary structure, heterohexamer composed of two FlhC and four FlhD subunits. Each FlhC binds a FlhD dimer, forming a heterotrimer, and a hexamer assembles by dimerization of two heterotrimers. Requires Zn(2+) as cofactor.

It localises to the cytoplasm. Functions in complex with FlhD as a master transcriptional regulator that regulates transcription of several flagellar and non-flagellar operons by binding to their promoter region. Activates expression of class 2 flagellar genes, including fliA, which is a flagellum-specific sigma factor that turns on the class 3 genes. Also regulates genes whose products function in a variety of physiological pathways. This is Flagellar transcriptional regulator FlhC from Proteus mirabilis.